We begin with the raw amino-acid sequence, 322 residues long: Undecaprenyl-phosphate 4-deoxy-4-formamido-L-arabinose transferase (322 aa).

The Cytoplasmic segment spans residues 1-235 (MFEIHPVKKV…TCLTTTPLRM (235 aa)). Residues 236–256 (LSLLGSIIAIGGFSIAVLLVI) traverse the membrane as a helical segment. Topologically, residues 257 to 269 (LRLTFGPQWAAEG) are periplasmic. The chain crosses the membrane as a helical span at residues 270 to 290 (VFMLFAVLFTFIGAQFIGMGL). Over 291-322 (LGEYIGRIYTDVRARPRYFVQQVIRPSSKENE) the chain is Cytoplasmic.

The protein belongs to the glycosyltransferase 2 family.

It is found in the cell inner membrane. The catalysed reaction is UDP-4-deoxy-4-formamido-beta-L-arabinose + di-trans,octa-cis-undecaprenyl phosphate = 4-deoxy-4-formamido-alpha-L-arabinopyranosyl di-trans,octa-cis-undecaprenyl phosphate + UDP. The protein operates within glycolipid biosynthesis; 4-amino-4-deoxy-alpha-L-arabinose undecaprenyl phosphate biosynthesis; 4-amino-4-deoxy-alpha-L-arabinose undecaprenyl phosphate from UDP-4-deoxy-4-formamido-beta-L-arabinose and undecaprenyl phosphate: step 1/2. It participates in bacterial outer membrane biogenesis; lipopolysaccharide biosynthesis. Its function is as follows. Catalyzes the transfer of 4-deoxy-4-formamido-L-arabinose from UDP to undecaprenyl phosphate. The modified arabinose is attached to lipid A and is required for resistance to polymyxin and cationic antimicrobial peptides. The chain is Undecaprenyl-phosphate 4-deoxy-4-formamido-L-arabinose transferase from Shigella dysenteriae serotype 1 (strain Sd197).